Consider the following 262-residue polypeptide: Encapsulin nanocompartment protein Rv1762c (262 aa).

The protein belongs to the UPF0145 family.

The protein resides in the encapsulin nanocompartment. In terms of biological role, cargo protein of a type 1 encapsulin nanocompartment possibly involved in protection against oxidative stress. The protein is Encapsulin nanocompartment protein Rv1762c of Mycobacterium tuberculosis (strain ATCC 25618 / H37Rv).